A 281-amino-acid polypeptide reads, in one-letter code: Auxin-responsive protein IAA19 (281 aa).

The short motif at Leu-40–Leu-44 is the EAR-like (transcriptional repression) element. The interval Leu-66–Ala-126 is disordered. Over residues Gly-79 to Arg-91 the composition is skewed to basic and acidic residues. Low complexity predominate over residues Gly-114 to Ala-126. The PB1 domain maps to Cys-161–Asp-265.

This sequence belongs to the Aux/IAA family. As to quaternary structure, homodimers and heterodimers. In terms of tissue distribution, expressed in etiolated seedlings and flowers.

The protein localises to the nucleus. In terms of biological role, aux/IAA proteins are short-lived transcriptional factors that function as repressors of early auxin response genes at low auxin concentrations. This is Auxin-responsive protein IAA19 (IAA19) from Oryza sativa subsp. japonica (Rice).